The following is a 618-amino-acid chain: Carbamoyl phosphate synthase large chain, C-terminal section (618 aa).

Residues 1–78 (MDMEKLKEIL…ETFVYKEQDE (78 aa)) form an oligomerization domain region. Positions 79–477 (SNPSDRKKVI…YKAQLSANME (399 aa)) are carbamoyl phosphate synthetic domain. Residues 208-399 (SKLLKKLNIP…LAKLATKIML (192 aa)) form the ATP-grasp domain. Positions 244, 283, 285, 290, 315, 316, 317, 318, 358, and 370 each coordinate ATP. Mg(2+) contacts are provided by Gln-358, Glu-370, and Asn-372. 3 residues coordinate Mn(2+): Gln-358, Glu-370, and Asn-372. The 143-residue stretch at 476–618 (MELPIVGNVF…ELDARIKNRF (143 aa)) folds into the MGS-like domain. Positions 478–618 (LPIVGNVFIS…ELDARIKNRF (141 aa)) are allosteric domain.

The protein belongs to the CarB family. As to quaternary structure, composed of two chains; the small (or glutamine) chain promotes the hydrolysis of glutamine to ammonia, which is used by the large (or ammonia) chain to synthesize carbamoyl phosphate. Tetramer of heterodimers (alpha,beta)4. Mg(2+) serves as cofactor. Mn(2+) is required as a cofactor.

It carries out the reaction hydrogencarbonate + L-glutamine + 2 ATP + H2O = carbamoyl phosphate + L-glutamate + 2 ADP + phosphate + 2 H(+). The enzyme catalyses hydrogencarbonate + NH4(+) + 2 ATP = carbamoyl phosphate + 2 ADP + phosphate + 2 H(+). It participates in amino-acid biosynthesis; L-arginine biosynthesis; carbamoyl phosphate from bicarbonate: step 1/1. It functions in the pathway pyrimidine metabolism; UMP biosynthesis via de novo pathway; (S)-dihydroorotate from bicarbonate: step 1/3. Large subunit of the glutamine-dependent carbamoyl phosphate synthetase (CPSase). CPSase catalyzes the formation of carbamoyl phosphate from the ammonia moiety of glutamine, carbonate, and phosphate donated by ATP, constituting the first step of 2 biosynthetic pathways, one leading to arginine and/or urea and the other to pyrimidine nucleotides. The large subunit (synthetase) binds the substrates ammonia (free or transferred from glutamine from the small subunit), hydrogencarbonate and ATP and carries out an ATP-coupled ligase reaction, activating hydrogencarbonate by forming carboxy phosphate which reacts with ammonia to form carbamoyl phosphate. The chain is Carbamoyl phosphate synthase large chain, C-terminal section (carB2) from Methanocaldococcus jannaschii (strain ATCC 43067 / DSM 2661 / JAL-1 / JCM 10045 / NBRC 100440) (Methanococcus jannaschii).